The chain runs to 117 residues: Antimicrobial peptide AmAMP1 (117 aa).

Positions 1-25 (MPSIRVLFVLLAVILLFMEVKMTSA) are cleaved as a signal peptide. The propeptide occupies 26-73 (ASIVKDVDEDETLENEDGEAMENSWPWHGVEDTSDYSDLSDLANSEKR). 3 cysteine pairs are disulfide-bonded: cysteine 76–cysteine 115, cysteine 85–cysteine 108, and cysteine 94–cysteine 112.

This sequence belongs to the coral AMP family.

The protein localises to the secreted. Its function is as follows. Coral peptide that probably acts as an antimicrobial peptide in the surface mucous layer of planula larvae and likely also in adults. Shows moderate to high activity against some Gram-negative and Gram-positive bacteria (tested on E.coli, B.megaterium, S.aureus, E.aesturaii, B.algicola, Acinetobacter spec.). Does not show antibacterial activity against the coral pathogen V.coralliilyticus. The polypeptide is Antimicrobial peptide AmAMP1 (Acropora millepora (Staghorn coral)).